Consider the following 113-residue polypeptide: Dynein light chain Tctex-type 1 (113 aa).

At Met1 the chain carries N-acetylmethionine. The segment at 41–113 (QWTTNVVEQT…CIVSAFGLSI (73 aa)) is interaction with GNB1.

The protein belongs to the dynein light chain Tctex-type family. Homodimer. The cytoplasmic dynein 1 complex consists of two catalytic heavy chains (HCs) and a number of non-catalytic subunits presented by intermediate chains (ICs), light intermediate chains (LICs) and light chains (LCs); the composition seems to vary in respect to the IC, LIC and LC composition. The heavy chain homodimer serves as a scaffold for the probable homodimeric assembly of the non-catalytic subunits. The ICs and LICs bind directly to the HC dimer and the LCs assemble on the IC dimer. DYNLT1 and DYNLT3 compete for association with dynein IC (DYNC1I1 or DYNC1I2). Self-associates. Interacts with RHO. Interacts with DYNC1I1 and DYNC1I2. Interacts with DOC2A, DOC2B and SCN10A. Interacts with PVR. Interacts with SVIL isoform 2. Interacts with GNB1; the interaction occurs in presence of guanine nucleotide-binding protein G(T) subunit gamma; the interaction diminishes the association of DYNLT1 with dynein IC (DYNC1I1 or DYNC1I2). Interacts with GNB2, GNB3 and GNB5; the interactions occur in presence of guanine nucleotide-binding protein G(T) subunit gamma. Interacts with ACVR2B and ARHGEF2. Interacts with DNAI4. Interacts with CFAP61. Phosphorylated by BMPR2. The phosphorylation status is proposed to regulate the association with the cytoplasmic dynein complex and may have role in cytoplasmic dynein cargo release.

The protein resides in the golgi apparatus. It localises to the cytoplasm. The protein localises to the cytoskeleton. Its subcellular location is the spindle. In terms of biological role, acts as one of several non-catalytic accessory components of the cytoplasmic dynein 1 complex that are thought to be involved in linking dynein to cargos and to adapter proteins that regulate dynein function. Cytoplasmic dynein 1 acts as a motor for the intracellular retrograde motility of vesicles and organelles along microtubules. Binds to transport cargos and is involved in apical cargo transport such as rhodopsin-bearing vesicles in polarized epithelia. May also be a accessory component of axonemal dynein. Functionally, plays a role in neuronal morphogenesis; the function is independent of cytoplasmic dynein and seems to be coupled to regulation of the actin cytoskeleton by enhancing Rac1 activity. The function in neurogenesis may be regulated by association with a G-protein beta-gamma dimer. May function as a receptor-independent activator of heterotrimeric G-protein signaling; the activation appears to be independent of a nucleotide exchange. Plays a role in regulating neurogenesis; inhibits the genesis of neurons from precursor cells during cortical development presumably by antagonizing ARHGEF2. Involved in the regulation of mitotic spindle orientation. Unrelated to the role in retrograde microtubule-associated movement may play a role in the dimerization of cytoplasmic proteins/domains such as for ACVR2B. Binds to the cytoplasmic domain of ACVR2B and, in vitro, inhibits ACVR2B signaling. This Bos taurus (Bovine) protein is Dynein light chain Tctex-type 1 (DYNLT1).